A 3305-amino-acid polypeptide reads, in one-letter code: Apolipophorins (3305 aa).

The first 23 residues, 1–23, serve as a signal peptide directing secretion; it reads MGKSNRLLSVLFVISVLWKAAYG. Positions 39 to 640 constitute a Vitellogenin domain; it reads FAAGQKYNYG…SQTSFLPRSV (602 aa). Residues asparagine 643 and asparagine 2769 are each glycosylated (N-linked (GlcNAc...) asparagine). Residues 2733 to 2899 form the VWFD domain; the sequence is LRAVVVNGQH…NSYRLSRSCP (167 aa). Cysteines 2757 and 2898 form a disulfide.

In terms of processing, cleaved into 2 chains by furin protease. However, prevention of cleavage does not impair its function. N-glycosylated.

The protein localises to the secreted. In terms of biological role, constitutes the major component of lipophorin, which mediates transport for various types of lipids in hemolymph. Acts by forming lipoprotein particles that bind lipoproteins and lipids. May be required for morphogens wingless (wg) and hedgehog (hh) function, possibly by acting as vehicles for the movement of wg and hh. This Manduca sexta (Tobacco hawkmoth) protein is Apolipophorins.